We begin with the raw amino-acid sequence, 225 residues long: Uracil-DNA glycosylase (225 aa).

Catalysis depends on D67, which acts as the Proton acceptor.

This sequence belongs to the uracil-DNA glycosylase (UDG) superfamily. UNG family.

The protein localises to the cytoplasm. It catalyses the reaction Hydrolyzes single-stranded DNA or mismatched double-stranded DNA and polynucleotides, releasing free uracil.. Its function is as follows. Excises uracil residues from the DNA which can arise as a result of misincorporation of dUMP residues by DNA polymerase or due to deamination of cytosine. The chain is Uracil-DNA glycosylase from Coxiella burnetii (strain Dugway 5J108-111).